A 586-amino-acid polypeptide reads, in one-letter code: MDKYTNRDHPDYIPGTFNIYSSQNLENGIIYESKLKKTSSGVVLIPQPSYSPNDPLNWSSWRKLAHFGLMAFITAFTAATSNDAGAAQDSLNEIYGISYDSMNTGAGVLFLGIGWSTLFLAPFANLYGRKITYIVCTTLGLFGALWFALAKRTSDTIWSQLFVGISESCAEAQVQLSLSDIFFQHQLGSVLTVYIMCTSIGTFLGPLIAGYISAFTNFRWVGWVAVIISGGLLITIIFGCEETYFDRGQYMTPLTSCQSGYEDGTTLQNSDNTAVSRRKRHLDAKLSTPGAMGEKGVDLSETAEFEVNNEEEVTIPETRELIDGSKEHLKPYPKRVAILTKATNLKGYGFKQYFKYLKINLRMFLFPPVWLSGMFWGIQDVFLTFYLTTQESAYYEPPWNYSDFGVAIMNVPTLIGAVIGCICAGIVSDYFVLWMARHNRGILEAEFRLYFSIATAIIGPAGLLMFGIGTARQWPWQAIYVGLGFVGFAWGCSGDIAMAYLMDCYPDMVLEGMVCTAIINNTISCIFTFTCSDWLAASGTENTYIALAVINFGITAFALPMYYYGKRIRLWTKRWYLQSVNLRDGV.

The Extracellular portion of the chain corresponds to 1-66; that stretch reads MDKYTNRDHP…NWSSWRKLAH (66 aa). Residues 67–87 traverse the membrane as a helical segment; sequence FGLMAFITAFTAATSNDAGAA. Topologically, residues 88–103 are cytoplasmic; it reads QDSLNEIYGISYDSMN. A helical membrane pass occupies residues 104 to 124; sequence TGAGVLFLGIGWSTLFLAPFA. Residues 125–130 are Extracellular-facing; sequence NLYGRK. The helical transmembrane segment at 131–151 threads the bilayer; that stretch reads ITYIVCTTLGLFGALWFALAK. Over 152-189 the chain is Cytoplasmic; sequence RTSDTIWSQLFVGISESCAEAQVQLSLSDIFFQHQLGS. A helical transmembrane segment spans residues 190-210; the sequence is VLTVYIMCTSIGTFLGPLIAG. The Extracellular portion of the chain corresponds to 211–219; sequence YISAFTNFR. Residues 220-240 traverse the membrane as a helical segment; sequence WVGWVAVIISGGLLITIIFGC. The Cytoplasmic portion of the chain corresponds to 241-362; it reads EETYFDRGQY…YFKYLKINLR (122 aa). Residues 363–383 form a helical membrane-spanning segment; it reads MFLFPPVWLSGMFWGIQDVFL. At 384-413 the chain is on the extracellular side; that stretch reads TFYLTTQESAYYEPPWNYSDFGVAIMNVPT. The helical transmembrane segment at 414–434 threads the bilayer; sequence LIGAVIGCICAGIVSDYFVLW. Residues 435 to 448 lie on the Cytoplasmic side of the membrane; sequence MARHNRGILEAEFR. A helical transmembrane segment spans residues 449 to 469; sequence LYFSIATAIIGPAGLLMFGIG. Over 470–477 the chain is Extracellular; the sequence is TARQWPWQ. Residues 478-498 traverse the membrane as a helical segment; that stretch reads AIYVGLGFVGFAWGCSGDIAM. Residues 499 to 508 are Cytoplasmic-facing; it reads AYLMDCYPDM. Residues 509–529 traverse the membrane as a helical segment; it reads VLEGMVCTAIINNTISCIFTF. Residues 530-544 lie on the Extracellular side of the membrane; the sequence is TCSDWLAASGTENTY. The helical transmembrane segment at 545–565 threads the bilayer; the sequence is IALAVINFGITAFALPMYYYG. Residues 566–586 are Cytoplasmic-facing; that stretch reads KRIRLWTKRWYLQSVNLRDGV.

It is found in the membrane. Functionally, seems to be involved in the uptake of several cations and of histidinol. In Saccharomyces cerevisiae (strain ATCC 204508 / S288c) (Baker's yeast), this protein is Protein HOL1 (HOL1).